A 308-amino-acid chain; its full sequence is Growth/differentiation factor 15 (308 aa).

Residues 1 to 29 (MPGQELKTLNGSQMLLVLLVLLWPPHGGA) form the signal peptide. Positions 30–192 (VSLAEASRAS…HLRPRASRGR (163 aa)) are excised as a propeptide. An N-linked (GlcNAc...) asparagine glycan is attached at Asn-70. Residues 152–179 (APALHLRLSPPPSQSDQLLVKSSSSRPQ) form a disordered region. Polar residues predominate over residues 165-178 (QSDQLLVKSSSSRP). 4 disulfides stabilise this stretch: Cys-203–Cys-210, Cys-211–Cys-274, Cys-240–Cys-305, and Cys-244–Cys-307.

This sequence belongs to the TGF-beta family. As to quaternary structure, homodimer; disulfide-linked. Interacts with GFRAL and RET; ligand of GFRAL, which mediates GDF15 internalization and cellular signaling through interaction with RET via the formation of a 2:2:2 ternary complex composed of GDF15, GFRAL and RET. As to expression, detected in plasma (at protein level).

The protein resides in the secreted. Its function is as follows. Hormone produced in response to various stresses to confer information about those stresses to the brain, and trigger an aversive response, characterized by nausea and/or loss of appetite. The aversive response is both required to reduce continuing exposure to those stresses at the time of exposure and to promote avoidance behavior in the future. Acts by binding to its receptor, GFRAL, activating GFRAL-expressing neurons localized in the area postrema and nucleus tractus solitarius of the brainstem. It then triggers the activation of neurons localized within the parabrachial nucleus and central amygdala, which constitutes part of the 'emergency circuit' that shapes responses to stressful conditions. The GDF15-GFRAL signal induces expression of genes involved in metabolism, such as lipid metabolism in adipose tissues. Required for avoidance behavior in response to food allergens: induced downstream of mast cell activation to promote aversion and minimize harmful effects of exposure to noxious substances. In addition to suppress appetite, also promotes weight loss by enhancing energy expenditure in muscle: acts by increasing calcium futile cycling in muscle. Contributes to the effect of metformin, an anti-diabetic drug, on appetite reduction and weight loss: produced in the kidney in response to metformin treatment, thereby activating the GDF15-GFRAL response, leading to reduced appetite and weight. Produced in response to anticancer drugs, such as camptothecin or cisplatin, promoting nausea and contributing to malnutrition. Overproduced in many cancers, promoting anorexia in cancer (cachexia). Responsible for the risk of nausea during pregnancy: high levels of GDF15 during pregnancy, mostly originating from embryos, are associated with increased nausea. Maternal sensitivity to nausea is probably determined by pre-pregnancy exposure to GDF15, females with naturally high level of GDF15 being less susceptible to nausea than females with low levels of GDF15 before pregnancy. Promotes metabolic adaptation in response to systemic inflammation caused by bacterial and viral infections in order to promote tissue tolerance and prevent tissue damage. Inhibits growth hormone signaling on hepatocytes. In Macaca fascicularis (Crab-eating macaque), this protein is Growth/differentiation factor 15.